The chain runs to 585 residues: Dihydroxy-acid dehydratase, mitochondrial (585 aa).

The N-terminal 20 residues, 1–20 (MGLLTKVATSRQFSTTRCVA), are a transit peptide targeting the mitochondrion. Cys-70 lines the [2Fe-2S] cluster pocket. Asp-102 serves as a coordination point for Mg(2+). Cys-143 serves as a coordination point for [2Fe-2S] cluster. Asp-144 is a Mg(2+) binding site. Cys-221 provides a ligand contact to [2Fe-2S] cluster. Glu-474 provides a ligand contact to Mg(2+). Residue Ser-500 is the Proton acceptor of the active site.

It belongs to the IlvD/Edd family. Requires [2Fe-2S] cluster as cofactor. The cofactor is Mg(2+).

The protein resides in the mitochondrion. It catalyses the reaction (2R)-2,3-dihydroxy-3-methylbutanoate = 3-methyl-2-oxobutanoate + H2O. The catalysed reaction is (2R,3R)-2,3-dihydroxy-3-methylpentanoate = (S)-3-methyl-2-oxopentanoate + H2O. The protein operates within amino-acid biosynthesis; L-isoleucine biosynthesis; L-isoleucine from 2-oxobutanoate: step 3/4. Its pathway is amino-acid biosynthesis; L-valine biosynthesis; L-valine from pyruvate: step 3/4. Catalytic activity is inactivated under iron-limiting conditions. Its function is as follows. Dihydroxyacid dehydratase that catalyzes the third step in the common pathway leading to biosynthesis of branched-chain amino acids. Catalyzes the dehydration of (2R,3R)-2,3-dihydroxy-3-methylpentanoate (2,3-dihydroxy-3-methylvalerate) into 2-oxo-3-methylpentanoate (2-oxo-3-methylvalerate) and of (2R)-2,3-dihydroxy-3-methylbutanoate (2,3-dihydroxyisovalerate) into 2-oxo-3-methylbutanoate (2-oxoisovalerate), the penultimate precursor to L-isoleucine and L-valine, respectively. Required for the synthesis of alpha-isopropylmalate which modulates the activity of LEU3 and subsequently regulates the expression of LEU1. This is Dihydroxy-acid dehydratase, mitochondrial from Saccharomyces cerevisiae (strain ATCC 204508 / S288c) (Baker's yeast).